The chain runs to 117 residues: MHFQLEMVTRETVVIRLFGELDHHAVEQIRAKISAAIFQGTVTTIIWNLEGLSFMDSSGVGLVLGRMRELEAVAGRTILLNPSPTMRKVFQFSGLGPWMMDATEEQAIDRVRGIVNG.

One can recognise an STAS domain in the interval 2-115 (HFQLEMVTRE…QAIDRVRGIV (114 aa)). A Phosphoserine modification is found at S58.

The protein belongs to the anti-sigma-factor antagonist family. Post-translationally, phosphorylated by SpoIIAB on a serine residue.

In the phosphorylated form it could act as an anti-anti-sigma factor that counteracts SpoIIAB and thus releases sigma f from inhibition. This chain is Anti-sigma F factor antagonist (spoIIAA), found in Lysinibacillus sphaericus (Bacillus sphaericus).